Here is a 209-residue protein sequence, read N- to C-terminus: Large ribosomal subunit protein bL25 (209 aa).

This sequence belongs to the bacterial ribosomal protein bL25 family. CTC subfamily. As to quaternary structure, part of the 50S ribosomal subunit; part of the 5S rRNA/L5/L18/L25 subcomplex. Contacts the 5S rRNA. Binds to the 5S rRNA independently of L5 and L18.

Functionally, this is one of the proteins that binds to the 5S RNA in the ribosome where it forms part of the central protuberance. This Xanthomonas campestris pv. campestris (strain 8004) protein is Large ribosomal subunit protein bL25.